A 771-amino-acid chain; its full sequence is 5-methyltetrahydropteroyltriglutamate--homocysteine methyltransferase (771 aa).

5-methyltetrahydropteroyltri-L-glutamate is bound by residues 16–19 (RELK) and K117. L-homocysteine-binding positions include 443–445 (IGS) and E496. Residues 443–445 (IGS) and E496 each bind L-methionine. 5-methyltetrahydropteroyltri-L-glutamate-binding positions include 527–528 (RC) and W573. Residue D611 coordinates L-homocysteine. D611 lines the L-methionine pocket. Residue E617 participates in 5-methyltetrahydropteroyltri-L-glutamate binding. Residues H653, C655, and E677 each coordinate Zn(2+). The active-site Proton donor is H706. Residue C738 participates in Zn(2+) binding.

The protein belongs to the vitamin-B12 independent methionine synthase family. Requires Zn(2+) as cofactor.

It carries out the reaction 5-methyltetrahydropteroyltri-L-glutamate + L-homocysteine = tetrahydropteroyltri-L-glutamate + L-methionine. Its pathway is amino-acid biosynthesis; L-methionine biosynthesis via de novo pathway; L-methionine from L-homocysteine (MetE route): step 1/1. Functionally, catalyzes the transfer of a methyl group from 5-methyltetrahydrofolate to homocysteine resulting in methionine formation. In Stutzerimonas stutzeri (strain A1501) (Pseudomonas stutzeri), this protein is 5-methyltetrahydropteroyltriglutamate--homocysteine methyltransferase.